The chain runs to 347 residues: NADH-quinone oxidoreductase subunit H 1 (347 aa).

A run of 9 helical transmembrane segments spans residues 13-33 (IIMI…IAYV), 50-70 (PNVV…KFVF), 82-102 (AVFL…WAVV), 115-135 (VGIL…IMGG), 161-181 (IGFV…TDIV), 198-218 (FLDW…ISAL), 263-283 (CALT…IWIL), 286-306 (VPGI…FAMV), and 321-341 (LGWK…AFVL).

This sequence belongs to the complex I subunit 1 family. NDH-1 is composed of 14 different subunits. Subunits NuoA, H, J, K, L, M, N constitute the membrane sector of the complex.

The protein localises to the cell inner membrane. It catalyses the reaction a quinone + NADH + 5 H(+)(in) = a quinol + NAD(+) + 4 H(+)(out). Its function is as follows. NDH-1 shuttles electrons from NADH, via FMN and iron-sulfur (Fe-S) centers, to quinones in the respiratory chain. The immediate electron acceptor for the enzyme in this species is believed to be ubiquinone. Couples the redox reaction to proton translocation (for every two electrons transferred, four hydrogen ions are translocated across the cytoplasmic membrane), and thus conserves the redox energy in a proton gradient. This subunit may bind ubiquinone. This is NADH-quinone oxidoreductase subunit H 1 from Rhizobium etli (strain ATCC 51251 / DSM 11541 / JCM 21823 / NBRC 15573 / CFN 42).